A 419-amino-acid chain; its full sequence is L-rhamnose isomerase (419 aa).

Positions 262, 294, and 296 each coordinate Mn(2+).

Belongs to the rhamnose isomerase family. In terms of assembly, homotetramer. It depends on Mn(2+) as a cofactor.

Its subcellular location is the cytoplasm. It carries out the reaction L-rhamnopyranose = L-rhamnulose. It functions in the pathway carbohydrate degradation; L-rhamnose degradation; glycerone phosphate from L-rhamnose: step 1/3. Functionally, catalyzes the interconversion of L-rhamnose and L-rhamnulose. In Escherichia coli O9:H4 (strain HS), this protein is L-rhamnose isomerase.